The sequence spans 667 residues: Protein-glutamine gamma-glutamyltransferase 4 (667 aa).

Asn-151, Asn-220, and Asn-227 each carry an N-linked (GlcNAc...) asparagine glycan. Catalysis depends on residues Cys-256, His-315, and Asp-338. Ca(2+)-binding residues include Asn-378 and Asp-380. A glycan (N-linked (GlcNAc...) asparagine) is linked at Asn-408. 2 residues coordinate Ca(2+): Glu-430 and Glu-435. Residues 430 to 449 (EGSPEERKAMEKASGKRPDD) form a disordered region. Asn-472 and Asn-488 each carry an N-linked (GlcNAc...) asparagine glycan.

It belongs to the transglutaminase superfamily. Transglutaminase family. Homodimer. It depends on Ca(2+) as a cofactor. The N-terminus is blocked. In terms of processing, probably linked to the cell membrane via a lipid-anchor, possibly a GPI-anchor. Post-translationally, N-glycosylated on 2 Asn residues by a high mannose oligosaccharide consisting of five mannose residues and a fucosylated biantennary complex glycan. In terms of tissue distribution, expressed in the coagulating gland, the dorsal part of the prostate and in semen (at protein level). Expressed at low levels in the lateral prostate and seminal vesicle. Not expressed in the epididymis, kidney, liver, serum, sperm plug, testes and ventral prostate.

It localises to the secreted. Its subcellular location is the cell membrane. The enzyme catalyses L-glutaminyl-[protein] + L-lysyl-[protein] = [protein]-L-lysyl-N(6)-5-L-glutamyl-[protein] + NH4(+). In terms of biological role, associated with the mammalian reproductive process. Plays an important role in the formation of the seminal coagulum through the cross-linking of specific proteins present in the seminal plasma. Transglutaminase is also required to stabilize the copulatory plug. The chain is Protein-glutamine gamma-glutamyltransferase 4 (Tgm4) from Rattus norvegicus (Rat).